Consider the following 353-residue polypeptide: Photosystem II D2 protein (353 aa).

Thr2 is modified (N-acetylthreonine). A Phosphothreonine modification is found at Thr2. A helical transmembrane segment spans residues 41 to 61 (CAYFALGGWFTGTTFVTSWYT). His118 serves as a coordination point for chlorophyll a. The helical transmembrane segment at 125-141 (GFMLRQFEIARSVQLRP) threads the bilayer. The pheophytin a site is built by Gln130 and Asn143. Residues 153-166 (VFVSVFLIYPLGQS) form a helical membrane-spanning segment. Residue His198 participates in chlorophyll a binding. Residues 208–228 (AALLCAIHGATVENTLFEDGD) traverse the membrane as a helical segment. A plastoquinone-binding residues include His215 and Phe262. Residue His215 coordinates Fe cation. His269 is a Fe cation binding site. Residues 279–295 (GLWMSALGVVGLALNLR) traverse the membrane as a helical segment.

Belongs to the reaction center PufL/M/PsbA/D family. As to quaternary structure, PSII is composed of 1 copy each of membrane proteins PsbA, PsbB, PsbC, PsbD, PsbE, PsbF, PsbH, PsbI, PsbJ, PsbK, PsbL, PsbM, PsbT, PsbX, PsbY, PsbZ, Psb30/Ycf12, at least 3 peripheral proteins of the oxygen-evolving complex and a large number of cofactors. It forms dimeric complexes. It depends on The D1/D2 heterodimer binds P680, chlorophylls that are the primary electron donor of PSII, and subsequent electron acceptors. It shares a non-heme iron and each subunit binds pheophytin, quinone, additional chlorophylls, carotenoids and lipids. There is also a Cl(-1) ion associated with D1 and D2, which is required for oxygen evolution. The PSII complex binds additional chlorophylls, carotenoids and specific lipids. as a cofactor.

Its subcellular location is the plastid. It localises to the chloroplast thylakoid membrane. The catalysed reaction is 2 a plastoquinone + 4 hnu + 2 H2O = 2 a plastoquinol + O2. Photosystem II (PSII) is a light-driven water:plastoquinone oxidoreductase that uses light energy to abstract electrons from H(2)O, generating O(2) and a proton gradient subsequently used for ATP formation. It consists of a core antenna complex that captures photons, and an electron transfer chain that converts photonic excitation into a charge separation. The D1/D2 (PsbA/PsbD) reaction center heterodimer binds P680, the primary electron donor of PSII as well as several subsequent electron acceptors. D2 is needed for assembly of a stable PSII complex. In Oenothera argillicola (Appalachian evening primrose), this protein is Photosystem II D2 protein.